Reading from the N-terminus, the 347-residue chain is NADH-ubiquinone oxidoreductase chain 2 (347 aa).

11 helical membrane passes run 3-23 (PPIL…VLMS), 25-45 (HWLM…PILM), 59-79 (YFLT…INLM), 96-116 (TMMT…FWVP), 122-142 (VHMS…LLVL), 149-169 (IDPN…GWGG), 178-198 (ILAY…LYNP), 200-220 (MMLL…MLFM), 242-262 (SLIL…GFIP), 274-294 (EMII…YFYM), and 323-343 (MILL…TPLL).

It belongs to the complex I subunit 2 family. In terms of assembly, core subunit of respiratory chain NADH dehydrogenase (Complex I) which is composed of 45 different subunits. Interacts with TMEM242.

The protein localises to the mitochondrion inner membrane. The catalysed reaction is a ubiquinone + NADH + 5 H(+)(in) = a ubiquinol + NAD(+) + 4 H(+)(out). In terms of biological role, core subunit of the mitochondrial membrane respiratory chain NADH dehydrogenase (Complex I) that is believed to belong to the minimal assembly required for catalysis. Complex I functions in the transfer of electrons from NADH to the respiratory chain. The immediate electron acceptor for the enzyme is believed to be ubiquinone. The sequence is that of NADH-ubiquinone oxidoreductase chain 2 from Suricata suricatta (Meerkat).